The sequence spans 193 residues: Outer membrane lipoprotein DolP (193 aa).

The signal sequence occupies residues 1–21; that stretch reads MTLSPLKKLAILLGATIFLQG. Cysteine 22 carries N-palmitoyl cysteine lipidation. A lipid anchor (S-diacylglycerol cysteine) is attached at cysteine 22. BON domains lie at 48–117 and 126–193; these read DDET…TVSP and KDSW…KYLD.

This sequence belongs to the lipoprotein DolP family.

It is found in the cell outer membrane. Plays an important role in maintaining outer membrane integrity. This is Outer membrane lipoprotein DolP from Haemophilus influenzae (strain ATCC 51907 / DSM 11121 / KW20 / Rd).